An 85-amino-acid chain; its full sequence is Metallothionein-like protein 4B (85 aa).

Residues 1 to 20 are disordered; that stretch reads MADTGKGSASASCNDRCGCP.

This sequence belongs to the metallothionein superfamily. Type 15 family. As to expression, expressed specifically in seeds.

It localises to the cytoplasm. It is found in the nucleus. The protein localises to the cell membrane. In terms of biological role, metallothioneins have a high content of cysteine residues that bind various heavy metals. Functions as a metal chelator of copper (Cu) and zinc (Zn). Plays a role in storing and distributing Zn ion in seed. The protein is Metallothionein-like protein 4B (MT4B) of Arabidopsis thaliana (Mouse-ear cress).